Reading from the N-terminus, the 278-residue chain is Protoheme IX farnesyltransferase (278 aa).

The next 9 membrane-spanning stretches (helical) occupy residues 12 to 32 (VIWLLILSSVVGYVYAAGTVD), 36 to 56 (LAALTAAATLAVGGSAAFNHY), 72 to 92 (PLPAGAIPPSNALVYSLALSA), 105 to 124 (LPGVFVALGWFFYAVVYTVW), 130 to 150 (WLNILGGGFAGNATFLGGYAL), 157 to 177 (LPAVLISFAIYLWIPSHIWAL), 204 to 224 (AIISALNIASAAYILWLYLVF), 228 to 248 (LPGLALVLAGVAGTVATSALA), and 257 to 277 (MWRMYKASSPILTLFLLALVF).

Belongs to the UbiA prenyltransferase family. Protoheme IX farnesyltransferase subfamily.

The protein localises to the cell membrane. It catalyses the reaction heme b + (2E,6E)-farnesyl diphosphate + H2O = Fe(II)-heme o + diphosphate. Its pathway is porphyrin-containing compound metabolism; heme O biosynthesis; heme O from protoheme: step 1/1. In terms of biological role, converts heme B (protoheme IX) to heme O by substitution of the vinyl group on carbon 2 of heme B porphyrin ring with a hydroxyethyl farnesyl side group. The protein is Protoheme IX farnesyltransferase of Pyrobaculum neutrophilum (strain DSM 2338 / JCM 9278 / NBRC 100436 / V24Sta) (Thermoproteus neutrophilus).